The primary structure comprises 58 residues: Large ribosomal subunit protein bL33 (58 aa).

This sequence belongs to the bacterial ribosomal protein bL33 family.

In Brachyspira hyodysenteriae (strain ATCC 49526 / WA1), this protein is Large ribosomal subunit protein bL33.